A 752-amino-acid polypeptide reads, in one-letter code: Putative xanthine dehydrogenase molybdenum-binding subunit XdhA (752 aa).

Mo-molybdopterin-binding residues include Q206, F237, R350, and A516.

This sequence belongs to the xanthine dehydrogenase family. Heterotrimer of XdhA, XdhB and XdhC. Mo-molybdopterin is required as a cofactor.

The catalysed reaction is xanthine + NAD(+) + H2O = urate + NADH + H(+). It catalyses the reaction hypoxanthine + NAD(+) + H2O = xanthine + NADH + H(+). The protein operates within purine metabolism; hypoxanthine degradation; urate from hypoxanthine: step 1/2. It participates in purine metabolism; hypoxanthine degradation; urate from hypoxanthine: step 2/2. Functionally, presumed to be a dehydrogenase, but possibly an oxidase. Participates in limited purine salvage (requires aspartate) but does not support aerobic growth on purines as the sole carbon source (purine catabolism). Deletion results in increased adenine sensitivity, suggesting that this protein contributes to the conversion of adenine to guanine nucleotides during purine salvage. This is Putative xanthine dehydrogenase molybdenum-binding subunit XdhA (xdhA) from Escherichia coli (strain K12).